Here is a 206-residue protein sequence, read N- to C-terminus: GTP cyclohydrolase 1 (206 aa).

Zn(2+) is bound by residues cysteine 97, histidine 100, and cysteine 168.

It belongs to the GTP cyclohydrolase I family. As to quaternary structure, toroid-shaped homodecamer, composed of two pentamers of five dimers.

It carries out the reaction GTP + H2O = 7,8-dihydroneopterin 3'-triphosphate + formate + H(+). It participates in cofactor biosynthesis; 7,8-dihydroneopterin triphosphate biosynthesis; 7,8-dihydroneopterin triphosphate from GTP: step 1/1. The protein is GTP cyclohydrolase 1 of Chromobacterium violaceum (strain ATCC 12472 / DSM 30191 / JCM 1249 / CCUG 213 / NBRC 12614 / NCIMB 9131 / NCTC 9757 / MK).